A 197-amino-acid polypeptide reads, in one-letter code: Nucleoid occlusion factor SlmA (197 aa).

The region spanning 7–67 (INRREHILQC…GLIEFIEDAI (61 aa)) is the HTH tetR-type domain. The segment at residues 30-49 (TTAKLAAEVGVSEAALYRHF) is a DNA-binding region (H-T-H motif).

It belongs to the nucleoid occlusion factor SlmA family. Homodimer. Interacts with FtsZ.

Its subcellular location is the cytoplasm. The protein localises to the nucleoid. Its function is as follows. Required for nucleoid occlusion (NO) phenomenon, which prevents Z-ring formation and cell division over the nucleoid. Acts as a DNA-associated cell division inhibitor that binds simultaneously chromosomal DNA and FtsZ, and disrupts the assembly of FtsZ polymers. SlmA-DNA-binding sequences (SBS) are dispersed on non-Ter regions of the chromosome, preventing FtsZ polymerization at these regions. This Shewanella denitrificans (strain OS217 / ATCC BAA-1090 / DSM 15013) protein is Nucleoid occlusion factor SlmA.